The primary structure comprises 221 residues: MSYGRPPPDVEGMTSLKVDNLTYRTSPDTLRRVFEKYGRVGDVYIPRDRYTKESRGFAFVRFHDKRDAEDAMDAMDGAVLDGRELRVQMARYGRPPDSHHSRRGPPPRRYGGGGYGRRSRSPRRRRRSRSRSRSRSRSRSRSRYSRSKSRSRTRSRSRSTSKSRSARRSKSKSSSVSRSRSRSRSRSRSRSPPPASKRESKSRSRSKSPPKSPEEEGAVSS.

Serine 2 carries the N-acetylserine modification. Serine 2 carries the phosphoserine modification. An RRM domain is found at threonine 14–tyrosine 92. Residues threonine 22 and threonine 25 each carry the phosphothreonine modification. A Phosphoserine modification is found at serine 26. N6-acetyllysine is present on lysine 52. The disordered stretch occupies residues tyrosine 92–serine 221. Composition is skewed to basic residues over residues arginine 117–serine 171 and serine 179–serine 189. 7 positions are modified to phosphoserine: serine 189, serine 191, serine 204, serine 206, serine 208, serine 212, and serine 220.

It belongs to the splicing factor SR family. In terms of assembly, in vitro, self-associates and binds SRSF1/SFRS1 (ASF/SF2), SNRNP70 and U2AF1 but not U2AF2. Binds SREK1/SFRS12. Interacts with CCNL1 and CCNL2. Interacts with SCAF11. Interacts with ZRSR2/U2AF1-RS2. Interacts with CCDC55 (via C-terminus). Interacts with BRDT. Extensively phosphorylated on serine residues in the RS domain. Phosphorylated by SRPK2 and this causes its redistribution from the nuclear speckle to nucleoplasm and controls cell fate decision in response to cisplatin treatment. KAT5/TIP60 inhibits its phosphorylation by preventing SRPK2 nuclear translocation. In terms of processing, acetylation on Lys-52 by KAT5/TIP60 promotes its proteasomal degradation. This effect is counterbalanced by HDAC6, which positively controls SRSF2 protein level by deacetylating it and preventing its proteasomal degradation.

It is found in the nucleus. The protein resides in the nucleoplasm. Its subcellular location is the nucleus speckle. In terms of biological role, necessary for the splicing of pre-mRNA. It is required for formation of the earliest ATP-dependent splicing complex and interacts with spliceosomal components bound to both the 5'- and 3'-splice sites during spliceosome assembly. It also is required for ATP-dependent interactions of both U1 and U2 snRNPs with pre-mRNA. Interacts with other spliceosomal components, via the RS domains, to form a bridge between the 5'- and 3'-splice site binding components, U1 snRNP and U2AF. Binds to purine-rich RNA sequences, either 5'-AGSAGAGTA-3' (S=C or G) or 5'-GTTCGAGTA-3'. Can bind to beta-globin mRNA and commit it to the splicing pathway. The phosphorylated form (by SRPK2) is required for cellular apoptosis in response to cisplatin treatment. This Sus scrofa (Pig) protein is Serine/arginine-rich splicing factor 2 (SRSF2).